The following is a 393-amino-acid chain: MKRPVTGKDLMIVNMGPHHPSMHGVLRLIVTLDGEDVVDCEPILGYLHRGMEKIAENRAIIQYLPYVTRWDYLATMFTEAITVNGPEQLGNIQVPKRASYIRVIMLELSRIASHLLWLGPFMADIGAQTPFFYIFREREFVYDLFEAATGMRMMHNFFRIGGIAADLPYGWIDKCLDFCDYFLTEVVEYQKLITRNPIFLERVEGVGIIGGEEAINWGLSGPMLRASGIPWDLRKIDRYESYDEFEWEIQWQKQGDSLARYLVRLSEMTESIKIIQQALEGLPGGPYENLESRGFDRKRNPEWNDFEYRFISKKPSPTFELSKQELYVRVEAPKGELGIFLIGDQSGFPWRWKIRPPGFINLQILPELVKRMKLADIMTILGSIDIIMGEVDR.

It belongs to the complex I 49 kDa subunit family. NDH is composed of at least 16 different subunits, 5 of which are encoded in the nucleus. Interacts with the chaperonin CNP60B4 subunit.

The protein resides in the plastid. The protein localises to the chloroplast thylakoid membrane. The enzyme catalyses a plastoquinone + NADH + (n+1) H(+)(in) = a plastoquinol + NAD(+) + n H(+)(out). It carries out the reaction a plastoquinone + NADPH + (n+1) H(+)(in) = a plastoquinol + NADP(+) + n H(+)(out). Functionally, NDH shuttles electrons from NAD(P)H:plastoquinone, via FMN and iron-sulfur (Fe-S) centers, to quinones in the photosynthetic chain and possibly in a chloroplast respiratory chain. The immediate electron acceptor for the enzyme in this species is believed to be plastoquinone. Couples the redox reaction to proton translocation, and thus conserves the redox energy in a proton gradient. This Arabidopsis thaliana (Mouse-ear cress) protein is NAD(P)H-quinone oxidoreductase subunit H, chloroplastic.